The chain runs to 527 residues: Amine oxidase [flavin-containing] A (527 aa).

Residue Met1 is modified to N-acetylmethionine. The Cytoplasmic segment spans residues 1–497 (MERQEKANNA…RTFWERNLPS (497 aa)). Ser383 carries the post-translational modification Phosphoserine. An S-8alpha-FAD cysteine modification is found at Cys406. A helical; Anchor for type IV membrane protein membrane pass occupies residues 498 to 518 (VTGLLKIIGFSTSVTALWLAV). Residues 519–527 (YKFRLLTRS) are Mitochondrial intermembrane-facing. Residues 520–522 (KFR) form an interaction with membrane phospholipid headgroups region.

The protein belongs to the flavin monoamine oxidase family. In terms of assembly, monomer, homo- or heterodimer (containing two subunits of similar size). Each subunit contains a covalently bound flavin. Enzymatically active as monomer. It depends on FAD as a cofactor.

It is found in the mitochondrion outer membrane. It catalyses the reaction a secondary aliphatic amine + O2 + H2O = a primary amine + an aldehyde + H2O2. The enzyme catalyses a primary methyl amine + O2 + H2O = an aldehyde + H2O2 + NH4(+). It carries out the reaction (R)-adrenaline + O2 + H2O = (R)-3,4-dihydroxymandelaldehyde + methylamine + H2O2. The catalysed reaction is dopamine + O2 + H2O = 3,4-dihydroxyphenylacetaldehyde + H2O2 + NH4(+). It catalyses the reaction tyramine + O2 + H2O = (4-hydroxyphenyl)acetaldehyde + H2O2 + NH4(+). The enzyme catalyses (R)-noradrenaline + O2 + H2O = (R)-3,4-dihydroxymandelaldehyde + H2O2 + NH4(+). It carries out the reaction serotonin + O2 + H2O = (5-hydroxyindol-3-yl)acetaldehyde + H2O2 + NH4(+). The catalysed reaction is kynuramine + O2 + H2O = 3-(2-aminophenyl)-3-oxopropanal + H2O2 + NH4(+). It catalyses the reaction tryptamine + O2 + H2O = indole-3-acetaldehyde + H2O2 + NH4(+). The enzyme catalyses 2-phenylethylamine + O2 + H2O = 2-phenylacetaldehyde + H2O2 + NH4(+). Functionally, catalyzes the oxidative deamination of primary and some secondary amine such as neurotransmitters, with concomitant reduction of oxygen to hydrogen peroxide and has important functions in the metabolism of neuroactive and vasoactive amines in the central nervous system and peripheral tissues. Preferentially oxidizes serotonin. Also catalyzes the oxidative deamination of kynuramine to 3-(2-aminophenyl)-3-oxopropanal that can spontaneously condense to 4-hydroxyquinoline. This chain is Amine oxidase [flavin-containing] A, found in Sus scrofa (Pig).